A 1109-amino-acid chain; its full sequence is Protein phosphatase 1 regulatory subunit 3A (1109 aa).

Phosphoserine; by GSK3 occurs at positions 40 and 44. Ser48 is modified (phosphoserine; by PKA and ISPK). Ser51 carries the post-translational modification Phosphoserine. Thr58 bears the Phosphothreonine mark. Residues 64–67 (RRVS) carry the PP1-binding motif motif. Ser67 is modified (phosphoserine; by PKA). The 109-residue stretch at 124-232 (QLQVQKAMLE…NNNGTNYTLV (109 aa)) folds into the CBM21 domain. The segment covering 236–251 (KEPEPEPGKPLEEAPS) has biased composition (basic and acidic residues). 4 disordered regions span residues 236-278 (KEPE…NFEN), 340-424 (GKNT…SDGS), 436-455 (DDNA…CSFP), and 493-517 (YFKK…KEKR). 3 stretches are compositionally biased toward polar residues: residues 340–352 (GKNT…SNIP), 360–384 (KNQS…SAES), and 396–406 (YSSGNESSHQP). The residue at position 843 (Ser843) is a Phosphoserine. Disordered stretches follow at residues 945-985 (SATE…RKEK) and 1011-1048 (SREN…ETQD). Over residues 951 to 963 (YNCSPTRETQGQP) the composition is skewed to polar residues. 2 stretches are compositionally biased toward basic and acidic residues: residues 966–985 (KPEE…RKEK) and 1011–1034 (SREN…KEFE). The segment covering 1035 to 1048 (SSASSSLPVQETQD) has biased composition (polar residues). The chain crosses the membrane as a helical span at residues 1066–1086 (FLLFLMFLVTVYHYDLMIGLA).

As to quaternary structure, interacts with PPP1CC catalytic subunit of PP1, and associates with glycogen. Phosphorylation at Ser-48 by ISPK stimulates the dephosphorylation of glycogen synthase and phosphorylase kinase. In terms of tissue distribution, skeletal muscle, diaphragm and cardiac muscle.

The protein localises to the membrane. Its function is as follows. Seems to act as a glycogen-targeting subunit for PP1. PP1 is essential for cell division, and participates in the regulation of glycogen metabolism, muscle contractility and protein synthesis. Plays an important role in glycogen synthesis but is not essential for insulin activation of glycogen synthase. This Oryctolagus cuniculus (Rabbit) protein is Protein phosphatase 1 regulatory subunit 3A (PPP1R3A).